The following is a 361-amino-acid chain: Peptide chain release factor 1 (361 aa).

Glutamine 235 carries the N5-methylglutamine modification.

This sequence belongs to the prokaryotic/mitochondrial release factor family. Post-translationally, methylated by PrmC. Methylation increases the termination efficiency of RF1.

The protein resides in the cytoplasm. Peptide chain release factor 1 directs the termination of translation in response to the peptide chain termination codons UAG and UAA. This Buchnera aphidicola subsp. Schizaphis graminum (strain Sg) protein is Peptide chain release factor 1.